The chain runs to 453 residues: Cytochrome b-c1 complex subunit 2, mitochondrial (453 aa).

Residues 1–14 (MKLLSRAGSFSRFY) constitute a mitochondrion transit peptide. 3 positions are modified to N6-acetyllysine: Lys66, Lys199, and Lys250. A Phosphoserine modification is found at Ser368.

The protein belongs to the peptidase M16 family. UQCRC2/QCR2 subfamily. In terms of assembly, component of the ubiquinol-cytochrome c oxidoreductase (cytochrome b-c1 complex, complex III, CIII), a multisubunit enzyme composed of 11 subunits. The complex is composed of 3 respiratory subunits cytochrome b, cytochrome c1 and Rieske protein UQCRFS1, 2 core protein subunits UQCRC1/QCR1 and UQCRC2/QCR2, and 6 low-molecular weight protein subunits UQCRH/QCR6, UQCRB/QCR7, UQCRQ/QCR8, UQCR10/QCR9, UQCR11/QCR10 and subunit 9, the cleavage product of Rieske protein UQCRFS1. The complex exists as an obligatory dimer and forms supercomplexes (SCs) in the inner mitochondrial membrane with NADH-ubiquinone oxidoreductase (complex I, CI) and cytochrome c oxidase (complex IV, CIV), resulting in different assemblies (supercomplex SCI(1)III(2)IV(1) and megacomplex MCI(2)III(2)IV(2)). Interacts with RAB5IF. Interacts with STMP1. Post-translationally, acetylation of Lys-159 and Lys-250 is observed in liver mitochondria from fasted mice but not from fed mice. As to expression, expressed in neurons and astrocytes of the cerebral cortex and hippocampus (at protein level).

Its subcellular location is the mitochondrion inner membrane. Component of the ubiquinol-cytochrome c oxidoreductase, a multisubunit transmembrane complex that is part of the mitochondrial electron transport chain which drives oxidative phosphorylation. The respiratory chain contains 3 multisubunit complexes succinate dehydrogenase (complex II, CII), ubiquinol-cytochrome c oxidoreductase (cytochrome b-c1 complex, complex III, CIII) and cytochrome c oxidase (complex IV, CIV), that cooperate to transfer electrons derived from NADH and succinate to molecular oxygen, creating an electrochemical gradient over the inner membrane that drives transmembrane transport and the ATP synthase. The cytochrome b-c1 complex catalyzes electron transfer from ubiquinol to cytochrome c, linking this redox reaction to translocation of protons across the mitochondrial inner membrane, with protons being carried across the membrane as hydrogens on the quinol. In the process called Q cycle, 2 protons are consumed from the matrix, 4 protons are released into the intermembrane space and 2 electrons are passed to cytochrome c. The 2 core subunits UQCRC1/QCR1 and UQCRC2/QCR2 are homologous to the 2 mitochondrial-processing peptidase (MPP) subunits beta-MPP and alpha-MPP respectively, and they seem to have preserved their MPP processing properties. May be involved in the in situ processing of UQCRFS1 into the mature Rieske protein and its mitochondrial targeting sequence (MTS)/subunit 9 when incorporated into complex III. The protein is Cytochrome b-c1 complex subunit 2, mitochondrial (Uqcrc2) of Mus musculus (Mouse).